Consider the following 2017-residue polypeptide: Protein cbp-1 (2017 aa).

Basic and acidic residues predominate over residues 1–13; sequence MDEPPSKKSRADS. A disordered region spans residues 1-182; sequence MDEPPSKKSR…PGMFQGDQQQ (182 aa). Low complexity-rich tracts occupy residues 21-30 and 78-90; these read ALSALESLEA and QPGQSQPQQPPQN. Positions 106–116 are enriched in polar residues; that stretch reads NPSQTSNNSPR. Residues 141–151 are compositionally biased toward low complexity; that stretch reads MMSPPSMGRVP. The span at 152–164 shows a compositional bias: pro residues; that stretch reads GPSPGGPQPPGPG. Over residues 165-182 the composition is skewed to low complexity; that stretch reads QPQMRPGQPGMFQGDQQQ. R234 carries the symmetric dimethylarginine; by PRMT5; in vitro modification. Residues 307–398 form a disordered region; sequence SNGQPIRGPN…PGSSMLATHQ (92 aa). Low complexity predominate over residues 340-379; the sequence is QAAAAQHAAQQQAAAQAQAQAAAQQQQQQQREQEAAAAAQ. The segment at 399–505 adopts a TAZ-type 1 zinc-finger fold; sequence DPEKRKLIQQ…REDCPVCKPL (107 aa). Disordered regions lie at residues 558–593 and 706–864; these read EGFNGNPFQNGPNRGGPRPPGGNGEIPNLPPPDMPD and GRSD…DTVF. Residues 559–573 show a composition bias toward low complexity; it reads GFNGNPFQNGPNRGG. The KIX domain occupies 593 to 672; sequence DCTKEWHHQV…KIYKIQKELQ (80 aa). The span at 721-773 shows a compositional bias: polar residues; sequence PSQQNQPWGGAPNSNMHQQIPPNGQVPQVNNSSTFPSSGNSTPNIGASSTVSA. Over residues 834 to 854 the composition is skewed to basic and acidic residues; it reads KDTKDGVAESKPKEQQAKREP. A Bromo domain is found at 864 to 970; it reads FSQEDLIKFL…EMFVSEMDPV (107 aa). Interaction with histone regions lie at residues 902–948 and 1224–1226; these read DYHE…YNRK and YLD. Residues 1112–1492 enclose the CBP/p300-type HAT domain; that stretch reads KYLASKLPHN…LAYSLHETDS (381 aa). Residues 1225-1227, 1237-1238, I1284, R1289, and W1293 contribute to the acetyl-CoA site; these read LDS and RT. A compositionally biased stretch (basic and acidic residues) spans 1349–1358; sequence NEEAQRKVKE. A disordered region spans residues 1349–1401; sequence NEEAQRKVKEDDDDGEDADGGLGGGDSGKKKSSKNKKNNLKKNAKMNKKKAGS. Over residues 1378–1399 the composition is skewed to basic residues; sequence KKSSKNKKNNLKKNAKMNKKKA. Residues 1494-1540 form a ZZ-type zinc finger; the sequence is GMEYTCNKCSSPAVWHCQSCDDFDLCDGCKPTTQHPHEMEKIKSLIG. The Zn(2+) site is built by C1499, C1502, C1510, C1513, C1519, C1522, H1528, and H1530. The TAZ-type 2 zinc-finger motif lies at 1550–1631; that stretch reads GGTRYESIQR…ACTVPFCMNI (82 aa). Disordered regions lie at residues 1656–1828 and 1908–2017; these read GLQS…QPVR and SQMS…AGGQ. Residues 1667–1678 show a composition bias toward polar residues; that stretch reads TPSTVSNGTPSN. Residues 1699–1708 are compositionally biased toward low complexity; that stretch reads QVQMQQHQGS. Positions 1748-1757 are enriched in polar residues; it reads PQMNANQSRY. Low complexity-rich tracts occupy residues 1793–1812 and 1908–1932; these read MNPQQQPQQQQGHPGLQNPG and SQMSMGSSNLQNLQQQQLQQQQAGA. The span at 1943–1962 shows a compositional bias: polar residues; sequence QNNSQPRAPSGQFASMNPSM. Positions 1963–2017 are enriched in low complexity; it reads QQQYPQQQQGWPQQRQQNPGGMQQNANPYNQFQNRQNMMMMPQQQQPHPSNAGGQ.

In terms of assembly, interacts (via N-terminus domain and HAT domain) with prmt-5; the interaction results in methylation of cbp-1. Interacts (via HAT domain) with cep-1; cep-1 transcriptional activity may be inhibited by interaction with methylated cbp-1. Component of a complex that contains prmt-5 and cbp-1. Methylation by prmt-5 may repress the capacity of cbp-1 to enhance cep-1-dependent transcription of egl-1.

Its subcellular location is the nucleus. The catalysed reaction is L-lysyl-[protein] + acetyl-CoA = N(6)-acetyl-L-lysyl-[protein] + CoA + H(+). Acetyltransferase enzyme. Acetylates histones, giving a specific tag for transcriptional activation. May prevent DNA damage-induced apoptosis by inhibiting cep-1-dependent transcription activation of the programmed cell death activator egl-1. In differentiated cells, negatively regulates localization of heterochromatin to the nuclear periphery. Plays a role in migration of gonadal distal tip cells, where it probably modulates expression of genes involved in integrin-mediated adhesion. The protein is Protein cbp-1 (cbp-1) of Caenorhabditis elegans.